A 301-amino-acid chain; its full sequence is Probable alpha-L-glutamate ligase (301 aa).

In terms of domain architecture, ATP-grasp spans 104–287 (MQLLSRKGIG…VAGLIVDFIE (184 aa)). Residues Lys-141, 178-179 (EF), Asp-187, and 211-213 (RSN) contribute to the ATP site. Positions 248, 260, and 262 each coordinate Mg(2+). Positions 248, 260, and 262 each coordinate Mn(2+).

Belongs to the RimK family. The cofactor is Mg(2+). Mn(2+) serves as cofactor.

This chain is Probable alpha-L-glutamate ligase, found in Aliivibrio salmonicida (strain LFI1238) (Vibrio salmonicida (strain LFI1238)).